Reading from the N-terminus, the 117-residue chain is Iron-sulfur cluster insertion protein ErpA (117 aa).

Residues Cys45, Cys109, and Cys111 each contribute to the iron-sulfur cluster site.

This sequence belongs to the HesB/IscA family. Homodimer. The cofactor is iron-sulfur cluster.

In terms of biological role, required for insertion of 4Fe-4S clusters for at least IspG. The chain is Iron-sulfur cluster insertion protein ErpA from Ruthia magnifica subsp. Calyptogena magnifica.